The following is a 514-amino-acid chain: tRNA-2-methylthio-N(6)-dimethylallyladenosine synthase (514 aa).

A disordered region spans residues 1 to 21 (MNEEQRKASSVDVLAERDKKA). In terms of domain architecture, MTTase N-terminal spans 68–186 (RTFLIKTYGC…LPEILEEAYL (119 aa)). Residues cysteine 77, cysteine 113, cysteine 147, cysteine 223, cysteine 227, and cysteine 230 each coordinate [4Fe-4S] cluster. Positions 209 to 440 (REGNIKAWVN…KKVGHYSQIA (232 aa)) constitute a Radical SAM core domain. The TRAM domain occupies 442–505 (SKYEGQTVTV…QYSLNGSFVK (64 aa)).

It belongs to the methylthiotransferase family. MiaB subfamily. Monomer. [4Fe-4S] cluster serves as cofactor.

Its subcellular location is the cytoplasm. The catalysed reaction is N(6)-dimethylallyladenosine(37) in tRNA + (sulfur carrier)-SH + AH2 + 2 S-adenosyl-L-methionine = 2-methylsulfanyl-N(6)-dimethylallyladenosine(37) in tRNA + (sulfur carrier)-H + 5'-deoxyadenosine + L-methionine + A + S-adenosyl-L-homocysteine + 2 H(+). In terms of biological role, catalyzes the methylthiolation of N6-(dimethylallyl)adenosine (i(6)A), leading to the formation of 2-methylthio-N6-(dimethylallyl)adenosine (ms(2)i(6)A) at position 37 in tRNAs that read codons beginning with uridine. The polypeptide is tRNA-2-methylthio-N(6)-dimethylallyladenosine synthase (Staphylococcus aureus (strain MRSA252)).